The following is a 543-amino-acid chain: CTP synthase (543 aa).

The amidoligase domain stretch occupies residues 1–265 (MARYIFITGG…DDEVLAAFGI (265 aa)). Residue S13 participates in CTP binding. Residue S13 coordinates UTP. An ATP-binding site is contributed by 14–19 (SLGKGL). Y54 provides a ligand contact to L-glutamine. D71 provides a ligand contact to ATP. Mg(2+) is bound by residues D71 and E139. Residues 146–148 (DIE), 186–191 (KTKPTQ), and K222 contribute to the CTP site. UTP-binding positions include 186–191 (KTKPTQ) and K222. Residue 238–240 (RDV) coordinates ATP. The Glutamine amidotransferase type-1 domain maps to 291–542 (TIAIVGKYTG…IQAAVVQSRL (252 aa)). G353 contacts L-glutamine. The active-site Nucleophile; for glutamine hydrolysis is C380. L-glutamine contacts are provided by residues 381-384 (FGMQ), E404, and R470. Active-site residues include H515 and E517.

This sequence belongs to the CTP synthase family. Homotetramer.

The catalysed reaction is UTP + L-glutamine + ATP + H2O = CTP + L-glutamate + ADP + phosphate + 2 H(+). It catalyses the reaction L-glutamine + H2O = L-glutamate + NH4(+). The enzyme catalyses UTP + NH4(+) + ATP = CTP + ADP + phosphate + 2 H(+). It functions in the pathway pyrimidine metabolism; CTP biosynthesis via de novo pathway; CTP from UDP: step 2/2. Allosterically activated by GTP, when glutamine is the substrate; GTP has no effect on the reaction when ammonia is the substrate. The allosteric effector GTP functions by stabilizing the protein conformation that binds the tetrahedral intermediate(s) formed during glutamine hydrolysis. Inhibited by the product CTP, via allosteric rather than competitive inhibition. Its function is as follows. Catalyzes the ATP-dependent amination of UTP to CTP with either L-glutamine or ammonia as the source of nitrogen. Regulates intracellular CTP levels through interactions with the four ribonucleotide triphosphates. In Bradyrhizobium sp. (strain BTAi1 / ATCC BAA-1182), this protein is CTP synthase.